The following is a 228-amino-acid chain: tRNA (guanine-N(1)-)-methyltransferase (228 aa).

Residues Gly-111 and 135 to 140 (LGDYVL) contribute to the S-adenosyl-L-methionine site.

Belongs to the RNA methyltransferase TrmD family. Homodimer.

It localises to the cytoplasm. The catalysed reaction is guanosine(37) in tRNA + S-adenosyl-L-methionine = N(1)-methylguanosine(37) in tRNA + S-adenosyl-L-homocysteine + H(+). Specifically methylates guanosine-37 in various tRNAs. This chain is tRNA (guanine-N(1)-)-methyltransferase, found in Clavibacter sepedonicus (Clavibacter michiganensis subsp. sepedonicus).